A 519-amino-acid chain; its full sequence is Acetylcholine receptor subunit gamma (519 aa).

The first 22 residues, 1 to 22 (MCGGQRPLFLLPLLAVCLGAKG), serve as a signal peptide directing secretion. The Extracellular segment spans residues 23-240 (RNQEERLLGD…VVFYLLIQRK (218 aa)). N-linked (GlcNAc...) asparagine glycosylation is found at asparagine 52 and asparagine 163. The cysteines at positions 150 and 164 are disulfide-linked. Helical transmembrane passes span 241–265 (PLFYVINIIAPCVLISSVAILIYFL), 274–292 (CTVAINVLLAQTVFLFLVA), and 308–329 (YLTFLLVVTILIVVNAVVVLNV). Residues 330-476 (SLRSPHTHSM…WFLVGRVLDR (147 aa)) are Cytoplasmic-facing. Residues 477–497 (VCFLAMLSLFVCGTAGIFLMA) traverse the membrane as a helical segment.

The protein belongs to the ligand-gated ion channel (TC 1.A.9) family. Acetylcholine receptor (TC 1.A.9.1) subfamily. Gamma/CHRNG sub-subfamily. As to quaternary structure, pentamer of two alpha chains, and one each of the beta, delta, and gamma (in immature muscle) or epsilon (in mature muscle) chains.

Its subcellular location is the postsynaptic cell membrane. It localises to the cell membrane. The enzyme catalyses K(+)(in) = K(+)(out). It carries out the reaction Na(+)(in) = Na(+)(out). Its function is as follows. After binding acetylcholine, the AChR responds by an extensive change in conformation that affects all subunits and leads to opening of an ion-conducting channel across the plasma membrane. This is Acetylcholine receptor subunit gamma (CHRNG) from Bos taurus (Bovine).